The following is a 577-amino-acid chain: 2-succinyl-5-enolpyruvyl-6-hydroxy-3-cyclohexene-1-carboxylate synthase (577 aa).

This sequence belongs to the TPP enzyme family. MenD subfamily. In terms of assembly, homodimer. The cofactor is Mg(2+). Mn(2+) is required as a cofactor. Thiamine diphosphate serves as cofactor.

It catalyses the reaction isochorismate + 2-oxoglutarate + H(+) = 5-enolpyruvoyl-6-hydroxy-2-succinyl-cyclohex-3-ene-1-carboxylate + CO2. It functions in the pathway quinol/quinone metabolism; 1,4-dihydroxy-2-naphthoate biosynthesis; 1,4-dihydroxy-2-naphthoate from chorismate: step 2/7. It participates in quinol/quinone metabolism; menaquinone biosynthesis. Catalyzes the thiamine diphosphate-dependent decarboxylation of 2-oxoglutarate and the subsequent addition of the resulting succinic semialdehyde-thiamine pyrophosphate anion to isochorismate to yield 2-succinyl-5-enolpyruvyl-6-hydroxy-3-cyclohexene-1-carboxylate (SEPHCHC). This is 2-succinyl-5-enolpyruvyl-6-hydroxy-3-cyclohexene-1-carboxylate synthase from Enterococcus faecalis (strain ATCC 700802 / V583).